The sequence spans 770 residues: Metallothionein expression activator (770 aa).

The interval 77 to 97 (LVPSPKTGDGSSDKKNIDRTW) is disordered. 5 positions are modified to phosphoserine: Ser-80, Ser-122, Ser-247, Ser-249, and Ser-253. Thr-259 carries the post-translational modification Phosphothreonine. A disordered region spans residues 286–323 (PPPTLISPRMSNTSINGSPSRKYHRQRYPNKSPESNGL). The segment covering 294-304 (RMSNTSINGSP) has biased composition (polar residues). 3 positions are modified to phosphoserine: Ser-385, Ser-392, and Ser-483. 2 positions are modified to phosphothreonine: Thr-486 and Thr-501. Ser-564 is modified (phosphoserine). C2H2-type zinc fingers lie at residues 603–627 (FECL…IQTH) and 633–657 (YSCD…KISH). Residues 662-685 (YICPCGKRFNREDALMVHRSRMIC) form a C2H2-type 3; atypical zinc finger. The segment at 699 to 770 (LTSPKKSLLD…RTLSNETDAL (72 aa)) is disordered. A compositionally biased stretch (basic and acidic residues) spans 705-745 (SLLDSPHDTSPVKETIARDKDGSVLMKMEEQLRDDMRKHGL). 2 positions are modified to phosphoserine: Ser-709 and Ser-714. Polar residues predominate over residues 754–770 (AHEQNSNRTLSNETDAL).

Its subcellular location is the nucleus. Functionally, plays a role in regulating basal-level expression of CUP1. Activates EGT2 transcription in the absence of SWI5. The chain is Metallothionein expression activator (ACE2) from Saccharomyces cerevisiae (strain ATCC 204508 / S288c) (Baker's yeast).